A 214-amino-acid polypeptide reads, in one-letter code: Cell division protein SepF (214 aa).

The segment at 24–120 (DNYEEYEERK…NTRRAQESTA (97 aa)) is disordered. A compositionally biased stretch (basic and acidic residues) spans 30 to 40 (EERKAVNEPPR). The span at 55-67 (ESYSQPAYTQQSE) shows a compositional bias: polar residues. Positions 69-98 (VVEKPSARYRSAEAHQERDTQQAAYTEKKV) are enriched in basic and acidic residues. The segment covering 101-120 (MRSSNQSATTNTRRAQESTA) has biased composition (polar residues).

It belongs to the SepF family. In terms of assembly, homodimer. Interacts with FtsZ.

The protein localises to the cytoplasm. Cell division protein that is part of the divisome complex and is recruited early to the Z-ring. Probably stimulates Z-ring formation, perhaps through the cross-linking of FtsZ protofilaments. Its function overlaps with FtsA. The chain is Cell division protein SepF from Enterococcus faecalis (strain ATCC 700802 / V583).